Here is a 709-residue protein sequence, read N- to C-terminus: Homeobox-leucine zipper protein HDG4 (709 aa).

The tract at residues glutamate 61–tyrosine 92 is disordered. The segment at residues lysine 88–glutamine 147 is a DNA-binding region (homeobox). Positions glutamine 137–methionine 205 form a coiled coil. Residues alanine 229 to serine 466 form the START domain.

It belongs to the HD-ZIP homeobox family. Class IV subfamily. In terms of tissue distribution, expressed in flowers.

The protein localises to the nucleus. In terms of biological role, probable transcription factor. This chain is Homeobox-leucine zipper protein HDG4, found in Arabidopsis thaliana (Mouse-ear cress).